The primary structure comprises 709 residues: MEKTFNLTRREDGIAILTMDVPGETMNTLKAEFGPEISEILSEIKRDSSIRGLVLISGKKDSFVAGADISMLDACQTAGDAKALSQQGHVVFNELEALNIPVVAAIHGACLGGGLELALACHQRVCSDDGKTMLGVPEVQLGLLPGGGGTQRLPRLVGITTALDMMLTGKQIRPKQALKMGLVNDVVPQTILLQTAVEMALAGKRTAKPVKKSLVNQLLEGTGFGRNIIFDQAAKQVAKKTQGNYPAPAKIIDCVRQGMAKGMQKGLEVEASHFAELVVSKESEALRSIFFATTEMKKETGAEGATPRKVKKAVILGGGLMGGGIASVTTTKAKIPARVKDINEKGLSNALSYAYKLLDKGVKRRHMTPAVRDNLMALMTTTTEYKGVKDADIVVEAVFEDLALKHQMVKDIERECGEHTIFASNTSSLPIGQIAQAASRPENVIGLHYFSPVEKMPLVEVIAHAKTSPETIATTVAFARKQGKTPIVVQDGAGFYVNRILALYMNEAAQLLLEGQSIEHLDKALVKFGFPVGPITLLDEVGIDVGAKIAPILEKELGERFKAPAAFDKLLSDDRKGRKNGKGFYQYAAGNKAPSKKKAVDESVYGVLGIKPGIDKEMSAVAERCVVQMLNEAVRCLDDGIIASPRDGDIGAIFGIGFPPFLGGPFHYIDTLGADNLVKILERYQAQYGDRFEPCPRLKEMAAEKTRFF.

The interval 1-188 (MEKTFNLTRR…KMGLVNDVVP (188 aa)) is enoyl-CoA hydratase. A 3-hydroxyacyl-CoA dehydrogenase region spans residues 308 to 709 (RKVKKAVILG…EMAAEKTRFF (402 aa)).

The protein in the N-terminal section; belongs to the enoyl-CoA hydratase/isomerase family. It in the central section; belongs to the 3-hydroxyacyl-CoA dehydrogenase family. As to quaternary structure, heterotetramer of two alpha chains (FadJ) and two beta chains (FadI).

Its subcellular location is the cytoplasm. It carries out the reaction a (3S)-3-hydroxyacyl-CoA = a (2E)-enoyl-CoA + H2O. The catalysed reaction is a 4-saturated-(3S)-3-hydroxyacyl-CoA = a (3E)-enoyl-CoA + H2O. It catalyses the reaction a (3S)-3-hydroxyacyl-CoA + NAD(+) = a 3-oxoacyl-CoA + NADH + H(+). The enzyme catalyses (3S)-3-hydroxybutanoyl-CoA = (3R)-3-hydroxybutanoyl-CoA. It participates in lipid metabolism; fatty acid beta-oxidation. In terms of biological role, catalyzes the formation of a hydroxyacyl-CoA by addition of water on enoyl-CoA. Also exhibits 3-hydroxyacyl-CoA epimerase and 3-hydroxyacyl-CoA dehydrogenase activities. The polypeptide is Fatty acid oxidation complex subunit alpha (Shewanella sp. (strain MR-4)).